The sequence spans 203 residues: NAD(P)H dehydrogenase (quinone) (203 aa).

Residues 7–194 enclose the Flavodoxin-like domain; it reads VLVLYHSSYG…SLARKQGAHV (188 aa). Residues 13–18 and 82–84 each bind FMN; these read SSYGHI and TRF. Residue Tyr15 coordinates NAD(+). Trp102 lines the substrate pocket. FMN-binding positions include 117–122 and His137; that span reads STGTGG.

It belongs to the WrbA family. FMN is required as a cofactor.

The catalysed reaction is a quinone + NADH + H(+) = a quinol + NAD(+). It carries out the reaction a quinone + NADPH + H(+) = a quinol + NADP(+). The polypeptide is NAD(P)H dehydrogenase (quinone) (Parvibaculum lavamentivorans (strain DS-1 / DSM 13023 / NCIMB 13966)).